The primary structure comprises 113 residues: Cell division protein FtsB (113 aa).

Over 1–3 (MRL) the chain is Cytoplasmic. A helical transmembrane segment spans residues 4–21 (ISLLLFVLLLAIQYPLWL). At 22–113 (GKGGWLRVWD…PNSVAGRGGH (92 aa)) the chain is on the periplasmic side. Positions 34–64 (RQVNEQTVHNQALKLRNAKLEGEVKDLQDGT) form a coiled coil. The tract at residues 93–113 (KVSATPPLPPPPNSVAGRGGH) is disordered.

Belongs to the FtsB family. Part of a complex composed of FtsB, FtsL and FtsQ.

It localises to the cell inner membrane. Essential cell division protein. May link together the upstream cell division proteins, which are predominantly cytoplasmic, with the downstream cell division proteins, which are predominantly periplasmic. The sequence is that of Cell division protein FtsB from Cupriavidus metallidurans (strain ATCC 43123 / DSM 2839 / NBRC 102507 / CH34) (Ralstonia metallidurans).